Here is a 722-residue protein sequence, read N- to C-terminus: Threonine--tRNA ligase 1, cytoplasmic (722 aa).

Polar residues predominate over residues 1-10; it reads MSQEKASSPS. A disordered region spans residues 1–48; the sequence is MSQEKASSPSGKMDGEKPVDASEEKRKEGGKKKSKDGGGDGGRAELNP. Positions 13–27 are enriched in basic and acidic residues; the sequence is MDGEKPVDASEEKRK. In terms of domain architecture, TGS spans 78 to 142; the sequence is DSKPIKVTLP…ETDCTLELLK (65 aa). Lys-242 carries the N6-acetyllysine modification. Thr-245 carries the post-translational modification Phosphothreonine. Tyr-297 carries the phosphotyrosine modification. At Thr-452 the chain carries Phosphothreonine.

The protein belongs to the class-II aminoacyl-tRNA synthetase family. Homodimer. ISGylated.

It is found in the cytoplasm. It carries out the reaction tRNA(Thr) + L-threonine + ATP = L-threonyl-tRNA(Thr) + AMP + diphosphate + H(+). In terms of biological role, catalyzes the attachment of threonine to tRNA(Thr) in a two-step reaction: threonine is first activated by ATP to form Thr-AMP and then transferred to the acceptor end of tRNA(Thr). Also edits incorrectly charged tRNA(Thr) via its editing domain, at the post-transfer stage. The polypeptide is Threonine--tRNA ligase 1, cytoplasmic (Tars1) (Mus musculus (Mouse)).